Reading from the N-terminus, the 307-residue chain is Non-homologous end joining protein Ku (307 aa).

The 169-residue stretch at 11–179 (LSFGLVSIPV…EVRSMKDLNI (169 aa)) folds into the Ku domain. Composition is skewed to low complexity over residues 257–267 (RGGAKAKPAAA) and 290–307 (ARAP…RARK). The segment at 257-307 (RGGAKAKPAAAPRRKAPEPVAGMAEATRARKPAARAPKSPAEAPAKVRARK) is disordered.

The protein belongs to the prokaryotic Ku family. As to quaternary structure, homodimer. Interacts with LigD.

With LigD forms a non-homologous end joining (NHEJ) DNA repair enzyme, which repairs dsDNA breaks with reduced fidelity. Binds linear dsDNA with 5'- and 3'- overhangs but not closed circular dsDNA nor ssDNA. Recruits and stimulates the ligase activity of LigD. This Paraburkholderia phymatum (strain DSM 17167 / CIP 108236 / LMG 21445 / STM815) (Burkholderia phymatum) protein is Non-homologous end joining protein Ku.